Consider the following 313-residue polypeptide: uncharacterized protein (313 aa).

The next 9 membrane-spanning stretches (helical) occupy residues 31-53, 62-84, 104-126, 147-161, 166-185, 198-220, 225-244, 264-282, and 286-308; these read AWGI…GWLF, LFLF…WNPY, VFFW…IYTS, FALL…NQSV, SMFW…SFLL, RVLK…ALRF, SFSG…YLII, FFAA…TSSF, and PAAM…SILI.

It localises to the cell membrane. This is an uncharacterized protein from Archaeoglobus fulgidus (strain ATCC 49558 / DSM 4304 / JCM 9628 / NBRC 100126 / VC-16).